We begin with the raw amino-acid sequence, 956 residues long: MTRRTMEKPFGCFLLLFCFTISIFFYSAAALTDEEASFLTRRQLLALSENGDLPDDIEYEVDLDLKFANNRLKRAYIALQAWKKAFYSDPFNTAANWVGPDVCSYKGVFCAPALDDPSVLVVAGIDLNHADIAGYLPPELGLLTDVALFHVNSNRFCGVIPKSLSKLTLMYEFDVSNNRFVGPFPTVALSWPSLKFLDIRYNDFEGKLPPEIFDKDLDAIFLNNNRFESTIPETIGKSTASVVTFAHNKFSGCIPKTIGQMKNLNEIVFIGNNLSGCLPNEIGSLNNVTVFDASSNGFVGSLPSTLSGLANVEQMDFSYNKFTGFVTDNICKLPKLSNFTFSYNFFNGEAQSCVPGSSQEKQFDDTSNCLQNRPNQKSAKECLPVVSRPVDCSKDKCAGGGGGGSNPSPKPTPTPKAPEPKKEINPPNLEEPSKPKPEESPKPQQPSPKPETPSHEPSNPKEPKPESPKQESPKTEQPKPKPESPKQESPKQEAPKPEQPKPKPESPKQESSKQEPPKPEESPKPEPPKPEESPKPQPPKQETPKPEESPKPQPPKQETPKPEESPKPQPPKQETPKPEESPKPQPPKQEQPPKTEAPKMGSPPLESPVPNDPYDASPIKKRRPQPPSPSTEETKTTSPQSPPVHSPPPPPPVHSPPPPVFSPPPPMHSPPPPVYSPPPPVHSPPPPPVHSPPPPVHSPPPPVHSPPPPVHSPPPPVHSPPPPVHSPPPPVQSPPPPPVFSPPPPAPIYSPPPPPVHSPPPPVHSPPPPPVHSPPPPVHSPPPPVHSPPPPVHSPPPPVHSPPPPSPIYSPPPPVFSPPPKPVTPLPPATSPMANAPTPSSSESGEISTPVQAPTPDSEDIEAPSDSNHSPVFKSSPAPSPDSEPEVEAPVPSSEPEVEAPKQSEATPSSSPPSSNPSPDVTAPPSEDNDDGDNFILPPNIGHQYASPPPPMFPGY.

Positions 1-30 (MTRRTMEKPFGCFLLLFCFTISIFFYSAAA) are cleaved as a signal peptide. LRR repeat units follow at residues 39 to 59 (LTRRQLLALSENGDLPDDIEY), 60 to 84 (EVDLDLKFANNRLKRAYIALQAWKK), 119 to 143 (VLVVAGIDLNHADIAGYLPPELGLL), 144 to 166 (TDVALFHVNSNRFCGVIPKSLSK), 168 to 191 (TLMYEFDVSNNRFVGPFPTVALSW), 192 to 215 (PSLKFLDIRYNDFEGKLPPEIFDK), 217 to 238 (LDAIFLNNNRFESTIPETIGKS), 240 to 261 (ASVVTFAHNKFSGCIPKTIGQM), 262 to 285 (KNLNEIVFIGNNLSGCLPNEIGSL), 287 to 309 (NVTVFDASSNGFVGSLPSTLSGL), and 310 to 332 (ANVEQMDFSYNKFTGFVTDNICK). Asn273 and Asn287 each carry an N-linked (GlcNAc...) asparagine glycan. The N-linked (GlcNAc...) asparagine glycan is linked to Asn338. Residues 355–377 (PGSSQEKQFDDTSNCLQNRPNQK) show a composition bias toward polar residues. Disordered stretches follow at residues 355 to 380 (PGSSQEKQFDDTSNCLQNRPNQKSAK) and 397 to 956 (CAGG…FPGY). The span at 408-417 (SPKPTPTPKA) shows a compositional bias: pro residues. Composition is skewed to basic and acidic residues over residues 431–441 (EPSKPKPEESP) and 452–534 (TPSH…EESP). Residues 640 to 830 (QSPPVHSPPP…KPVTPLPPAT (191 aa)) are compositionally biased toward pro residues. The tract at residues 651-956 (PPVHSPPPPV…SPPPPMFPGY (306 aa)) is contains the Ser-Pro(4) repeats. Over residues 837–852 (PTPSSSESGEISTPVQ) the composition is skewed to polar residues. Residues 947–956 (SPPPPMFPGY) show a composition bias toward pro residues.

In terms of processing, hydroxylated on proline residues in the S-P-P-P-P repeat. O-glycosylated on hydroxyprolines. As to expression, expressed in flowers, stamen, pollen, and pollinated carpels.

The protein resides in the secreted. It localises to the cell wall. Its function is as follows. Modulates cell morphogenesis by regulating cell wall formation and assembly, and/or growth polarization. The protein is Pollen-specific leucine-rich repeat extensin-like protein 1 (PEX1) of Arabidopsis thaliana (Mouse-ear cress).